The following is a 135-amino-acid chain: Histone H3.3C (135 aa).

The interval Met-1 to Tyr-41 is disordered. At Arg-3 the chain carries Asymmetric dimethylarginine; by PRMT6; alternate. Position 3 is a citrulline; alternate (Arg-3). The residue at position 4 (Thr-4) is a Phosphothreonine; by HASPIN. Residue Lys-5 is modified to Allysine; alternate. At Lys-5 the chain carries N6,N6,N6-trimethyllysine; alternate. Position 5 is an N6,N6-dimethyllysine; alternate (Lys-5). N6-(2-hydroxyisobutyryl)lysine; alternate is present on Lys-5. The residue at position 5 (Lys-5) is an N6-(beta-hydroxybutyryl)lysine; alternate. Lys-5 carries the post-translational modification N6-acetyllysine; alternate. Lys-5 is subject to N6-methyllysine; alternate. The residue at position 6 (Gln-6) is a 5-glutamyl dopamine; alternate. Gln-6 is modified (5-glutamyl serotonin; alternate). Phosphothreonine; by PKC is present on Thr-7. At Arg-9 the chain carries Citrulline; alternate. Symmetric dimethylarginine; by PRMT5; alternate is present on Arg-9. An N6,N6,N6-trimethyllysine; alternate modification is found at Lys-10. Lys-10 bears the N6,N6-dimethyllysine; alternate mark. N6-(2-hydroxyisobutyryl)lysine; alternate is present on Lys-10. Residue Lys-10 is modified to N6-(beta-hydroxybutyryl)lysine; alternate. An N6-acetyllysine; alternate modification is found at Lys-10. Lys-10 carries the post-translational modification N6-methyllysine; alternate. Lys-10 carries the post-translational modification N6-lactoyllysine; alternate. Ser-11 is modified (ADP-ribosylserine; alternate). Ser-11 is subject to Phosphoserine; alternate; by AURKB, AURKC, RPS6KA3, RPS6KA4 and RPS6KA5. A Phosphothreonine; by PKC modification is found at Thr-12. Position 15 is an N6-(2-hydroxyisobutyryl)lysine; alternate (Lys-15). N6-(beta-hydroxybutyryl)lysine; alternate is present on Lys-15. At Lys-15 the chain carries N6-acetyllysine; alternate. At Lys-15 the chain carries N6-lactoyllysine; alternate. Position 15 is an N6-glutaryllysine; alternate (Lys-15). Residue Lys-15 is modified to N6-succinyllysine; alternate. Arg-18 bears the Citrulline; alternate mark. Arg-18 is subject to Asymmetric dimethylarginine; by CARM1; alternate. 2 positions are modified to N6-(2-hydroxyisobutyryl)lysine; alternate: Lys-19 and Lys-24. Residues Lys-19 and Lys-24 each carry the N6-(beta-hydroxybutyryl)lysine; alternate modification. 2 positions are modified to N6-acetyllysine; alternate: Lys-19 and Lys-24. An N6-methyllysine; alternate mark is found at Lys-19 and Lys-24. Residues Lys-19 and Lys-24 each carry the N6-lactoyllysine; alternate modification. Residues Lys-19 and Lys-24 each carry the N6-glutaryllysine; alternate modification. 2 positions are modified to N6-butyryllysine; alternate: Lys-19 and Lys-24. Arg-27 is subject to Citrulline. At Lys-28 the chain carries N6,N6,N6-trimethyllysine; alternate. The residue at position 28 (Lys-28) is an N6,N6-dimethyllysine; alternate. Residue Lys-28 is modified to N6-(2-hydroxyisobutyryl)lysine; alternate. N6-acetyllysine; alternate is present on Lys-28. N6-methyllysine; alternate is present on Lys-28. Lys-28 bears the N6-lactoyllysine; alternate mark. At Lys-28 the chain carries N6-glutaryllysine; alternate. At Ser-29 the chain carries ADP-ribosylserine; alternate. At Ser-29 the chain carries Phosphoserine; alternate; by AURKB, AURKC and RPS6KA5. Ser-32 carries the post-translational modification Phosphoserine. Residue Lys-37 is modified to N6-methyllysine. A Phosphotyrosine modification is found at Tyr-41. Lys-56 carries the N6,N6,N6-trimethyllysine; alternate modification. At Lys-56 the chain carries N6-(2-hydroxyisobutyryl)lysine; alternate. N6-(beta-hydroxybutyryl)lysine; alternate is present on Lys-56. An N6-acetyllysine; alternate modification is found at Lys-56. An N6-lactoyllysine; alternate modification is found at Lys-56. Lys-56 is subject to N6-glutaryllysine; alternate. Position 56 is an N6-succinyllysine; alternate (Lys-56). At Lys-56 the chain carries N6-methyllysine; by EHMT2; alternate. Ser-57 carries the phosphoserine modification. An N6-(2-hydroxyisobutyryl)lysine; alternate modification is found at Lys-64. The residue at position 64 (Lys-64) is an N6-methyllysine; alternate. A Phosphothreonine modification is found at Thr-80. Ser-86 carries the post-translational modification Phosphoserine. Thr-107 is subject to Phosphothreonine. An N6-glutaryllysine; alternate mark is found at Lys-115 and Lys-122. The residue at position 115 (Lys-115) is an N6-acetyllysine. At Lys-122 the chain carries N6-(2-hydroxyisobutyryl)lysine; alternate. An N6-acetyllysine; alternate modification is found at Lys-122. Lys-122 carries the N6-methyllysine; alternate modification. Lys-122 carries the N6-succinyllysine; alternate modification.

This sequence belongs to the histone H3 family. As to quaternary structure, the nucleosome is a histone octamer containing two molecules each of H2A, H2B, H3 and H4 assembled in one H3-H4 heterotetramer and two H2A-H2B heterodimers. The octamer wraps approximately 147 bp of DNA. Acetylation is generally linked to gene activation. Acetylation on Lys-10 (H3K9ac) impairs methylation at Arg-9 (H3R8me2s). Acetylation on Lys-19 (H3K18ac) and Lys-24 (H3K24ac) favors methylation at Arg-18 (H3R17me). Acetylation at Lys-122 (H3K122ac) by EP300/p300 plays a central role in chromatin structure: localizes at the surface of the histone octamer and stimulates transcription, possibly by promoting nucleosome instability. Post-translationally, citrullination at Arg-9 (H3R8ci) and/or Arg-18 (H3R17ci) by PADI4 impairs methylation and represses transcription. In terms of processing, asymmetric dimethylation at Arg-18 (H3R17me2a) by CARM1 is linked to gene activation. Symmetric dimethylation at Arg-9 (H3R8me2s) by PRMT5 is linked to gene repression. Asymmetric dimethylation at Arg-3 (H3R2me2a) by PRMT6 is linked to gene repression and is mutually exclusive with H3 Lys-5 methylation (H3K4me2 and H3K4me3). H3R2me2a is present at the 3' of genes regardless of their transcription state and is enriched on inactive promoters, while it is absent on active promoters. Methylation at Lys-5 (H3K4me) is linked to gene activation. Methylation at Lys-5 (H3K4me) facilitates subsequent acetylation of H3 and H4. Methylation at Lys-10 (H3K9me) and Lys-28 (H3K27me) are linked to gene repression. Methylation at Lys-10 (H3K9me) is a specific target for HP1 proteins (CBX1, CBX3 and CBX5) and prevents subsequent phosphorylation at Ser-11 (H3S10ph) and acetylation of H3 and H4. Methylation at Lys-5 (H3K4me) requires preliminary monoubiquitination of H2B at 'Lys-120'. Methylation at Lys-10 (H3K9me) and Lys-28 (H3K27me) are enriched in inactive X chromosome chromatin. Monomethylation at Lys-56 (H3K56me1) by EHMT2/G9A in G1 phase promotes interaction with PCNA and is required for DNA replication. Post-translationally, phosphorylated at Thr-4 (H3T3ph) by HASPIN during prophase and dephosphorylated during anaphase. Phosphorylation at Ser-11 (H3S10ph) by AURKB is crucial for chromosome condensation and cell-cycle progression during mitosis and meiosis. In addition phosphorylation at Ser-11 (H3S10ph) by RPS6KA4 and RPS6KA5 is important during interphase because it enables the transcription of genes following external stimulation, like mitogens, stress, growth factors or UV irradiation and result in the activation of genes, such as c-fos and c-jun. Phosphorylation at Ser-11 (H3S10ph), which is linked to gene activation, prevents methylation at Lys-10 (H3K9me) but facilitates acetylation of H3 and H4. Phosphorylation at Ser-11 (H3S10ph) by AURKB mediates the dissociation of HP1 proteins (CBX1, CBX3 and CBX5) from heterochromatin. Phosphorylation at Ser-11 (H3S10ph) is also an essential regulatory mechanism for neoplastic cell transformation. Phosphorylated at Ser-29 (H3S28ph) by MAP3K20 isoform 1, RPS6KA5 or AURKB during mitosis or upon ultraviolet B irradiation. Phosphorylation at Thr-7 (H3T6ph) by PRKCB is a specific tag for epigenetic transcriptional activation that prevents demethylation of Lys-5 (H3K4me) by LSD1/KDM1A. At centromeres, specifically phosphorylated at Thr-12 (H3T11ph) from prophase to early anaphase, by DAPK3 and PKN1. Phosphorylation at Thr-12 (H3T11ph) by PKN1 or isoform M2 of PKM (PKM2) is a specific tag for epigenetic transcriptional activation that promotes demethylation of Lys-10 (H3K9me) by KDM4C/JMJD2C. Phosphorylation at Tyr-41 (H3Y41ph) by JAK2 promotes exclusion of CBX5 (HP1 alpha) from chromatin. In terms of processing, lysine deamination at Lys-5 (H3K4all) to form allysine is mediated by LOXL2. Allysine formation by LOXL2 only takes place on H3K4me3 and results in gene repression. Butyrylation of histones marks active promoters and competes with histone acetylation. It is present during late spermatogenesis. Post-translationally, succinylated. Desuccinylation at Lys-122 (H3K122succ) by SIRT7 in response to DNA damage promotes chromatin condensation and double-strand breaks (DSBs) repair. In terms of processing, serine ADP-ribosylation constitutes the primary form of ADP-ribosylation of proteins in response to DNA damage. Serine ADP-ribosylation at Ser-11 (H3S10ADPr) is mutually exclusive with phosphorylation at Ser-11 (H3S10ph) and impairs acetylation at Lys-10 (H3K9ac). In terms of tissue distribution, specifically expressed in the seminiferous tubules of testis.

It localises to the nucleus. The protein resides in the chromosome. Core component of nucleosome. Nucleosomes wrap and compact DNA into chromatin, limiting DNA accessibility to the cellular machineries which require DNA as a template. Histones thereby play a central role in transcription regulation, DNA repair, DNA replication and chromosomal stability. DNA accessibility is regulated via a complex set of post-translational modifications of histones, also called histone code, and nucleosome remodeling. Hominid-specific H3.5/H3F3C preferentially colocalizes with euchromatin, and it is associated with actively transcribed genes. This chain is Histone H3.3C, found in Homo sapiens (Human).